A 422-amino-acid polypeptide reads, in one-letter code: Histidine--tRNA ligase (422 aa).

Belongs to the class-II aminoacyl-tRNA synthetase family. Homodimer.

It localises to the cytoplasm. It carries out the reaction tRNA(His) + L-histidine + ATP = L-histidyl-tRNA(His) + AMP + diphosphate + H(+). The protein is Histidine--tRNA ligase of Onion yellows phytoplasma (strain OY-M).